The chain runs to 880 residues: DNA gyrase subunit A (880 aa).

The 496-residue stretch at 35–530 folds into the Topo IIA-type catalytic domain; that stretch reads LPDVRDGLKP…ASGDIDLEDL (496 aa). Tyr-123 serves as the catalytic O-(5'-phospho-DNA)-tyrosine intermediate. The short motif at 557 to 563 is the GyrA-box element; the sequence is QRRGGKG.

It belongs to the type II topoisomerase GyrA/ParC subunit family. Heterotetramer, composed of two GyrA and two GyrB chains. In the heterotetramer, GyrA contains the active site tyrosine that forms a transient covalent intermediate with DNA, while GyrB binds cofactors and catalyzes ATP hydrolysis.

It localises to the cytoplasm. The enzyme catalyses ATP-dependent breakage, passage and rejoining of double-stranded DNA.. Functionally, a type II topoisomerase that negatively supercoils closed circular double-stranded (ds) DNA in an ATP-dependent manner to modulate DNA topology and maintain chromosomes in an underwound state. Negative supercoiling favors strand separation, and DNA replication, transcription, recombination and repair, all of which involve strand separation. Also able to catalyze the interconversion of other topological isomers of dsDNA rings, including catenanes and knotted rings. Type II topoisomerases break and join 2 DNA strands simultaneously in an ATP-dependent manner. In Haemophilus influenzae (strain ATCC 51907 / DSM 11121 / KW20 / Rd), this protein is DNA gyrase subunit A.